The primary structure comprises 1447 residues: Adhesion G protein-coupled receptor L3 (1447 aa).

An N-terminal signal peptide occupies residues 1-19 (MWPSQLLIFMMLLAPIIHA). The Extracellular segment spans residues 20–862 (FSRAPIPMAV…VKHSDAVHDL (843 aa)). The SUEL-type lectin domain occupies 35-124 (SCESYPIELR…KYLEVQYECV (90 aa)). 5 disulfides stabilise this stretch: cysteine 36–cysteine 66, cysteine 45–cysteine 123, cysteine 78–cysteine 110, cysteine 91–cysteine 97, and cysteine 135–cysteine 317. A glycan (N-linked (GlcNAc...) asparagine) is linked at asparagine 93. The Olfactomedin-like domain maps to 134 to 393 (LCPGLLKGVY…VVKYSLDFGP (260 aa)). Positions 249-279 (YHDTSPYRWGGKSDIDLAVDENGLWVIYATE) are interaction with FLRT3. Positions 264, 312, 313, and 367 each coordinate Ca(2+). Residues 426–473 (DISTTGPLGMGSTTTSTTLRTTTLSPGRSTTPSVSGRRNRSTSTPSPA) are disordered. The segment covering 428–458 (STTGPLGMGSTTTSTTLRTTTLSPGRSTTPS) has biased composition (low complexity). Asparagine 464, asparagine 549, asparagine 746, asparagine 759, asparagine 804, and asparagine 830 each carry an N-linked (GlcNAc...) asparagine glycan. The GAIN-B domain occupies 675-854 (DIVRENTDNI…AVLMAHVEVK (180 aa)). Disulfide bonds link cysteine 805/cysteine 836 and cysteine 824/cysteine 838. Positions 805–854 (CSFWSYSKRTMTGYWSTQGCRLLTTNKTHTTCSCNHLTNFAVLMAHVEVK) are GPS. A stachel region spans residues 842-855 (TNFAVLMAHVEVKH). Residues 863 to 888 (LLDVITWVGILLSLVCLLICIFTFCF) form a helical membrane-spanning segment. Residues 889–896 (FRGLQSDR) are Cytoplasmic-facing. The chain crosses the membrane as a helical span at residues 897-918 (NTIHKNLCISLFVAELLFLIGI). Residues 919–926 (NRTDQPIA) are Extracellular-facing. The helical transmembrane segment at 927–950 (CAVFAALLHFFFLAAFTWMFLEGV) threads the bilayer. Residues cysteine 927 and cysteine 999 are joined by a disulfide bond. Residues 951–967 (QLYIMLVEVFESEHSRR) are Cytoplasmic-facing. Residues 968–990 (KYFYLVGYGMPALIVAVSAAVDY) traverse the membrane as a helical segment. Over 991 to 1005 (RSYGTDKVCWLRLDT) the chain is Extracellular. Residues 1006 to 1027 (YFIWSFIGPATLIIMLNVIFLG) traverse the membrane as a helical segment. Residues 1028 to 1053 (IALYKMFHHTAILKPESGCLDNIKSW) are Cytoplasmic-facing. The helical transmembrane segment at 1054–1073 (VIGAIALLCLLGLTWAFGLM) threads the bilayer. The Extracellular portion of the chain corresponds to 1074–1078 (YINES). Residue asparagine 1076 is glycosylated (N-linked (GlcNAc...) asparagine). The helical transmembrane segment at 1079–1104 (TVIMAYLFTIFNSLQGMFIFIFHCVL) threads the bilayer. Topologically, residues 1105-1447 (QKKVRKEYGK…KGPAHLVTSL (343 aa)) are cytoplasmic. The disordered stretch occupies residues 1123–1147 (GKSTESSIGSGKTSGSRTPGRYSTG). Serine 1164 is subject to Phosphoserine. The segment at 1423-1447 (IVPPNKDGTPPEGSSKGPAHLVTSL) is disordered. Positions 1442-1447 (HLVTSL) match the PDZ-binding motif.

The protein belongs to the G-protein coupled receptor 2 family. LN-TM7 subfamily. In terms of assembly, heterodimer of 2 chains generated by proteolytic processing; the large extracellular N-terminal fragment and the membrane-bound C-terminal fragment predominantly remain associated and non-covalently linked. Interacts (via olfactomedin-like domain) with FLRT1 (via extracellular domain). Interacts (via olfactomedin-like domain) with FLRT2 (via extracellular domain). Interacts (via olfactomedin-like domain) with FLRT3 (via extracellular domain); the interaction is direct. Interacts (via extracellular domain) with TENM1. Interacts (via extracellular domain) with TENM2. Interacts (via extracellular domain) with TENM3. Identified in a complex with FLRT3 and UNC5B; does not interact with UNC5B by itself. Identified in a complex with FLRT3 and UNC5D; does not interact with UNC5D by itself. Interacts (via PDZ-binding motif) with SHANK3. Interacts (via PDZ-binding motif) with DLG4. Post-translationally, autoproteolytically processed at the GPS region of the GAIN-B domain; this cleavage modulates receptor activity.

It localises to the cell membrane. The protein localises to the postsynaptic cell membrane. The protein resides in the cell projection. It is found in the axon. Its subcellular location is the cell junction. Forms a heterodimer of 2 chains generated by proteolytic processing that remain associated through non-covalent interactions mediated by the GAIN-B domain. In the inactivated receptor, the Stachel sequence (also named stalk) is embedded in the GAIN-B domain, where it adopts a beta-strand conformation. On activation, the Stachel moves into the 7 transmembrane region and adopts a twisted hook-shaped configuration that forms contacts within the receptor, leading to coupling of a G-alpha protein, which activates signaling. The cleaved GAIN-B and N-terminal domains can then dissociate from the rest of the receptor. Orphan adhesion G-protein coupled receptor (aGPCR), which mediates synapse specificity. Ligand binding causes a conformation change that triggers signaling via guanine nucleotide-binding proteins (G proteins) and modulates the activity of downstream effectors. ADGRL3 is coupled with different classes of G alpha proteins, such as G(12)/G(13), G(s), G(i) or G(q), depending on the context. Coupling to G(12)/G(13) G proteins, which mediates the activation Rho small GTPases is the most efficient. Following G-protein coupled receptor activation, associates with cell adhesion molecules that are expressed at the surface of adjacent cells to direct synapse specificity. Specifically mediates the establishment of Schaffer-collateral synapses formed by CA3-region axons on CA1-region pyramidal neurons in the hippocampus. Localizes to postsynaptic spines in excitatory synapses in the S.oriens and S.radiatum and interacts with presynaptic cell adhesion molecules FLRT3 and TENM2, promoting synapse formation. Plays a role in the development of glutamatergic synapses in the cortex. Important in determining the connectivity rates between the principal neurons in the cortex. Functionally, orphan adhesion G-protein coupled receptor (aGPCR), which mediates synapse specificity. Ligand binding causes a conformation change that triggers signaling via guanine nucleotide-binding proteins (G proteins) and modulates the activity of downstream effectors, such as adenylate cyclase. Isoform 1 is specifically coupled to G(s) G proteins and mediates activation of adenylate cyclase activity. Following G-protein coupled receptor activation, undergoes liquid-liquid phase transition, associates with (1) cell adhesion molecules that are expressed at the surface of adjacent cells, as well as (2) PDZ-containing proteins, such as SHANK3 and DLG4, in the cytoplasm to direct synapse formation. The protein is Adhesion G protein-coupled receptor L3 of Homo sapiens (Human).